A 144-amino-acid chain; its full sequence is Large ribosomal subunit protein uL15 (144 aa).

Positions 1 to 51 (MQLNTLSPAQGEKKSRKRVGRGIGSGIGKTCGSGHKGQKSRSGGFNKIGFE) are disordered. Over residues 21 to 35 (RGIGSGIGKTCGSGH) the composition is skewed to gly residues.

This sequence belongs to the universal ribosomal protein uL15 family. In terms of assembly, part of the 50S ribosomal subunit.

Functionally, binds to the 23S rRNA. This Vesicomyosocius okutanii subsp. Calyptogena okutanii (strain HA) protein is Large ribosomal subunit protein uL15.